The sequence spans 392 residues: GTPase Obg (392 aa).

An Obg domain is found at 1–159 (MKFVDEATIL…RDLQLELMLL (159 aa)). Residues 127-148 (NSRFKSSVNRSPRQKTMGTPGD) form a disordered region. Residues 129-143 (RFKSSVNRSPRQKTM) show a composition bias toward polar residues. The OBG-type G domain occupies 160–333 (ADVGMLGMPN…LCWDVMAFII (174 aa)). Residues 166–173 (GMPNAGKS), 191–195 (FTTLV), 213–216 (DIPG), 283–286 (NKID), and 314–316 (SAA) contribute to the GTP site. Mg(2+)-binding residues include serine 173 and threonine 193. Acidic residues predominate over residues 363-386 (EQEVEVEDDEEWDEDWDEDDEEGV). A disordered region spans residues 363-392 (EQEVEVEDDEEWDEDWDEDDEEGVEFIYKR).

This sequence belongs to the TRAFAC class OBG-HflX-like GTPase superfamily. OBG GTPase family. Monomer. Mg(2+) is required as a cofactor.

Its subcellular location is the cytoplasm. Its function is as follows. An essential GTPase which binds GTP, GDP and possibly (p)ppGpp with moderate affinity, with high nucleotide exchange rates and a fairly low GTP hydrolysis rate. Plays a role in control of the cell cycle, stress response, ribosome biogenesis and in those bacteria that undergo differentiation, in morphogenesis control. In Enterobacter sp. (strain 638), this protein is GTPase Obg.